The following is a 428-amino-acid chain: Phosphoglucosamine mutase (428 aa).

The active-site Phosphoserine intermediate is the Ser-96. Positions 96, 229, 231, and 233 each coordinate Mg(2+). Ser-96 carries the post-translational modification Phosphoserine.

Belongs to the phosphohexose mutase family. Mg(2+) is required as a cofactor. Post-translationally, activated by phosphorylation.

It carries out the reaction alpha-D-glucosamine 1-phosphate = D-glucosamine 6-phosphate. Catalyzes the conversion of glucosamine-6-phosphate to glucosamine-1-phosphate. The sequence is that of Phosphoglucosamine mutase from Thermotoga neapolitana (strain ATCC 49049 / DSM 4359 / NBRC 107923 / NS-E).